Reading from the N-terminus, the 224-residue chain is Response regulator protein GraR (224 aa).

Residues 2–115 enclose the Response regulatory domain; sequence QILLVEDDNT…VLIAKLQAIY (114 aa). At D51 the chain carries 4-aspartylphosphate. Positions 126–224 form a DNA-binding region, ompR/PhoB-type; it reads KRTLTWQDAV…KVGKGYMAHE (99 aa). Residues T128, T130, and T149 each carry the phosphothreonine modification.

Interacts with GraX. Phosphorylated by GraS. Phosphorylated by Stk1; phosphorylation increases the DNA-binding activity of GraR.

The protein localises to the cytoplasm. Its function is as follows. Member of the two-component regulatory system GraR/GraS involved in resistance against cationic antimicrobial peptides (CAMPs). Upon phosphorylation by GraS, functions as a transcription regulator by direct binding to promoter regions of target genes such as adhesins, exoproteins, transporters, toxins, and proteins involved in cell wall synthesis. Down-regulates the expression of many genes involved in RNA and amino acid synthesis or glycolysis. The chain is Response regulator protein GraR (graR) from Staphylococcus aureus (strain USA300).